The chain runs to 138 residues: MRTLWIMAVLLVGVDGGLWQFENMIIKVVKKSGILSYSAYGCYCGWGGRGKPKDATDRCCFVHDCCYGKVTGCNPKLGKYTYSWNNGDIVCEGDGPCKEVCECDRAAAICFRDNLDTYDRNKYWRYPASNCQEDSEPC.

An N-terminal signal peptide occupies residues 1 to 16 (MRTLWIMAVLLVGVDG). Disulfide bonds link Cys-42/Cys-131, Cys-44/Cys-60, Cys-59/Cys-110, Cys-65/Cys-138, Cys-66/Cys-103, Cys-73/Cys-97, and Cys-91/Cys-101. Ca(2+) is bound by residues Tyr-43, Gly-45, and Gly-47. Residue His-63 is part of the active site. Asp-64 is a binding site for Ca(2+). Residue Asp-104 is part of the active site.

It belongs to the phospholipase A2 family. Group II subfamily. D49 sub-subfamily. As to quaternary structure, homodimer. Ca(2+) serves as cofactor. In terms of tissue distribution, expressed by the venom gland.

It is found in the secreted. The catalysed reaction is a 1,2-diacyl-sn-glycero-3-phosphocholine + H2O = a 1-acyl-sn-glycero-3-phosphocholine + a fatty acid + H(+). Functionally, snake venom phospholipase A2 (PLA2) that is highly lipolytic and myolytic. PLA2 catalyzes the calcium-dependent hydrolysis of the 2-acyl groups in 3-sn-phosphoglycerides. In Protobothrops flavoviridis (Habu), this protein is Acidic phospholipase A2 1.